The primary structure comprises 147 residues: Cyanate hydratase (147 aa).

Residues Arg88, Glu91, and Ser114 contribute to the active site.

This sequence belongs to the cyanase family.

The enzyme catalyses cyanate + hydrogencarbonate + 3 H(+) = NH4(+) + 2 CO2. Functionally, catalyzes the reaction of cyanate with bicarbonate to produce ammonia and carbon dioxide. The protein is Cyanate hydratase of Methylibium petroleiphilum (strain ATCC BAA-1232 / LMG 22953 / PM1).